We begin with the raw amino-acid sequence, 453 residues long: Bifunctional protein GlmU (453 aa).

The interval 1–228 is pyrophosphorylase; the sequence is MPHWAAVIMA…VHEALGINSR (228 aa). UDP-N-acetyl-alpha-D-glucosamine is bound by residues lysine 23, glutamine 73, 78 to 79, 100 to 102, glycine 139, glutamate 153, asparagine 168, and asparagine 226; these read GT and SGD. A Mg(2+)-binding site is contributed by aspartate 102. Asparagine 226 is a Mg(2+) binding site. Residues 229–249 are linker; sequence AQLAAAEDVARQRILSYWMEE. The interval 250–453 is N-acetyltransferase; it reads GVTIIDPRST…IENWVRNKKK (204 aa). 2 residues coordinate UDP-N-acetyl-alpha-D-glucosamine: arginine 331 and lysine 349. Histidine 361 serves as the catalytic Proton acceptor. UDP-N-acetyl-alpha-D-glucosamine contacts are provided by tyrosine 364 and asparagine 375. Acetyl-CoA-binding positions include alanine 378, 384–385, serine 403, alanine 421, and arginine 438; that span reads NY.

The protein in the N-terminal section; belongs to the N-acetylglucosamine-1-phosphate uridyltransferase family. In the C-terminal section; belongs to the transferase hexapeptide repeat family. In terms of assembly, homotrimer. The cofactor is Mg(2+).

The protein resides in the cytoplasm. The enzyme catalyses alpha-D-glucosamine 1-phosphate + acetyl-CoA = N-acetyl-alpha-D-glucosamine 1-phosphate + CoA + H(+). It catalyses the reaction N-acetyl-alpha-D-glucosamine 1-phosphate + UTP + H(+) = UDP-N-acetyl-alpha-D-glucosamine + diphosphate. Its pathway is nucleotide-sugar biosynthesis; UDP-N-acetyl-alpha-D-glucosamine biosynthesis; N-acetyl-alpha-D-glucosamine 1-phosphate from alpha-D-glucosamine 6-phosphate (route II): step 2/2. The protein operates within nucleotide-sugar biosynthesis; UDP-N-acetyl-alpha-D-glucosamine biosynthesis; UDP-N-acetyl-alpha-D-glucosamine from N-acetyl-alpha-D-glucosamine 1-phosphate: step 1/1. It participates in bacterial outer membrane biogenesis; LPS lipid A biosynthesis. In terms of biological role, catalyzes the last two sequential reactions in the de novo biosynthetic pathway for UDP-N-acetylglucosamine (UDP-GlcNAc). The C-terminal domain catalyzes the transfer of acetyl group from acetyl coenzyme A to glucosamine-1-phosphate (GlcN-1-P) to produce N-acetylglucosamine-1-phosphate (GlcNAc-1-P), which is converted into UDP-GlcNAc by the transfer of uridine 5-monophosphate (from uridine 5-triphosphate), a reaction catalyzed by the N-terminal domain. The chain is Bifunctional protein GlmU from Desulfitobacterium hafniense (strain DSM 10664 / DCB-2).